Consider the following 94-residue polypeptide: DNA-directed RNA polymerase subunit omega (94 aa).

Belongs to the RNA polymerase subunit omega family. In terms of assembly, the RNAP catalytic core consists of 2 alpha, 1 beta, 1 beta' and 1 omega subunit. When a sigma factor is associated with the core the holoenzyme is formed, which can initiate transcription.

The enzyme catalyses RNA(n) + a ribonucleoside 5'-triphosphate = RNA(n+1) + diphosphate. Promotes RNA polymerase assembly. Latches the N- and C-terminal regions of the beta' subunit thereby facilitating its interaction with the beta and alpha subunits. The protein is DNA-directed RNA polymerase subunit omega of Photobacterium profundum (strain SS9).